A 462-amino-acid chain; its full sequence is Argininosuccinate lyase (462 aa).

It belongs to the lyase 1 family. Argininosuccinate lyase subfamily.

It is found in the cytoplasm. It catalyses the reaction 2-(N(omega)-L-arginino)succinate = fumarate + L-arginine. The protein operates within amino-acid biosynthesis; L-arginine biosynthesis; L-arginine from L-ornithine and carbamoyl phosphate: step 3/3. The sequence is that of Argininosuccinate lyase from Xanthobacter autotrophicus (strain ATCC BAA-1158 / Py2).